The primary structure comprises 478 residues: tRNA (guanine(10)-N(2))-methyltransferase TRMT11 (478 aa).

The interval 457 to 478 is disordered; the sequence is EERARSEMANAENVKSKGKEDV.

Belongs to the class I-like SAM-binding methyltransferase superfamily. TRM11 methyltransferase family. As to quaternary structure, part of the heterodimeric TRMT11-TRM112 methyltransferase complex; this complex forms an active tRNA methyltransferase, where TRMT112 acts as an activator of the catalytic subunit TRMT11.

The protein resides in the cytoplasm. The enzyme catalyses guanosine(10) in tRNA + S-adenosyl-L-methionine = N(2)-methylguanosine(10) in tRNA + S-adenosyl-L-homocysteine + H(+). Catalytic subunit of the TRMT11-TRM112 methyltransferase complex, that specifically mediates the S-adenosyl-L-methionine-dependent N(2)-methylation of guanosine nucleotide at position 10 (m2G10) in tRNAs. This is one of the major tRNA (guanine-N(2))-methyltransferases. This is tRNA (guanine(10)-N(2))-methyltransferase TRMT11 (trmt11.L) from Xenopus laevis (African clawed frog).